A 509-amino-acid chain; its full sequence is Cytochrome P450 monooxygenase fumoA (509 aa).

The helical transmembrane segment at 5-27 threads the bilayer; that stretch reads LANLNFPYLILSACLSAILLSRF. N-linked (GlcNAc...) asparagine glycans are attached at residues N317, N369, and N378. C456 is a binding site for heme. N-linked (GlcNAc...) asparagine glycosylation occurs at N464.

This sequence belongs to the cytochrome P450 family. Requires heme as cofactor.

Its subcellular location is the membrane. The protein operates within secondary metabolite biosynthesis. Cytochrome P450 monooxygenase; part of the gene cluster that mediates the biosynthesis of fumosorinone, a 2-pyridone alkaloid that acts as an inhibitor of protein tyrosine phosphatase 1B which is implicated asa negative regulator of insulin receptor signaling and a potential drug target for the treatment of type II diabetes and other associated metabolic syndromes. The polyketide-amino acid backbone of fumosorinone is first assembled by the PKS-NRPS hybrid fumoS. The PKS modules condense one acetyl-CoA starter unit with 7 malonyl-CoA units, programmed C-methylations occurring after the first 3 and the sixth extensions, and cycles of full reduction occurring after the first 2 extensions. Because fumoS lacks a designated enoyl reductase (ER) domain, the required activity is provided the enoyl reductase fumoC. Upon formation of the polyketide backbone on the thiotemplate, the polyketide is transferred to the NRPS module and linked to tyrosine to produce the acyltetramic acid intermediate called prefumosorinone A. The cytochrome P450 monooxygenase fumoA then probably catalyzes an unprecedented oxidative ring expansion of prefumosorinone A to form prefumosorinone B which contains the 2-pyridone core of fumosorinone. The cytochrome P450 monooxygenase fumoB might hydroxylate the nitrogen of prefumosorinone B, but not the acyltetramic acid prefumosorinone A, to form fumosorinone. The protein is Cytochrome P450 monooxygenase fumoA of Cordyceps fumosorosea (strain ARSEF 2679) (Isaria fumosorosea).